A 68-amino-acid polypeptide reads, in one-letter code: Ferredoxin Fdx (68 aa).

Residues cysteine 12, glutamine 13, alanine 16, cysteine 18, and cysteine 56 each contribute to the [3Fe-4S] cluster site.

The cofactor is [3Fe-4S] cluster.

Functionally, ferredoxin that is the redox partner of cytochrome CYP51, a sterol 14alpha-demethylase encoded by an adjacent gene. The polypeptide is Ferredoxin Fdx (Mycobacterium tuberculosis (strain ATCC 25618 / H37Rv)).